Reading from the N-terminus, the 81-residue chain is ATP synthase subunit c (81 aa).

A run of 2 helical transmembrane segments spans residues 6–26 and 57–77; these read AAAS…GPGF and LAFM…LLFA.

Belongs to the ATPase C chain family. As to quaternary structure, F-type ATPases have 2 components, F(1) - the catalytic core - and F(0) - the membrane proton channel. F(1) has five subunits: alpha(3), beta(3), gamma(1), delta(1), epsilon(1). F(0) has four main subunits: a(1), b(1), b'(1) and c(10-14). The alpha and beta chains form an alternating ring which encloses part of the gamma chain. F(1) is attached to F(0) by a central stalk formed by the gamma and epsilon chains, while a peripheral stalk is formed by the delta, b and b' chains.

It localises to the cellular thylakoid membrane. In terms of biological role, f(1)F(0) ATP synthase produces ATP from ADP in the presence of a proton or sodium gradient. F-type ATPases consist of two structural domains, F(1) containing the extramembraneous catalytic core and F(0) containing the membrane proton channel, linked together by a central stalk and a peripheral stalk. During catalysis, ATP synthesis in the catalytic domain of F(1) is coupled via a rotary mechanism of the central stalk subunits to proton translocation. Its function is as follows. Key component of the F(0) channel; it plays a direct role in translocation across the membrane. A homomeric c-ring of between 10-14 subunits forms the central stalk rotor element with the F(1) delta and epsilon subunits. This Rippkaea orientalis (strain PCC 8801 / RF-1) (Cyanothece sp. (strain PCC 8801)) protein is ATP synthase subunit c.